We begin with the raw amino-acid sequence, 447 residues long: Histidine--tRNA ligase (447 aa).

Belongs to the class-II aminoacyl-tRNA synthetase family. Homodimer.

The protein resides in the cytoplasm. It catalyses the reaction tRNA(His) + L-histidine + ATP = L-histidyl-tRNA(His) + AMP + diphosphate + H(+). The protein is Histidine--tRNA ligase (hisS) of Synechocystis sp. (strain ATCC 27184 / PCC 6803 / Kazusa).